The following is a 77-amino-acid chain: Kunitz-type serine protease inhibitor cvp2 (77 aa).

The N-terminal stretch at 1–23 (MNAKIVALLIVVGFVGMFNVATA) is a signal peptide. The BPTI/Kunitz inhibitor domain maps to 28 to 76 (CSLEPAVGLCKASIPRFASVGGKCQEFIYGGCGGNANNFQTQAECEAKC). 3 disulfides stabilise this stretch: Cys28-Cys76, Cys37-Cys59, and Cys51-Cys72.

The protein belongs to the venom Kunitz-type family. In terms of tissue distribution, expressed by the venom gland.

It is found in the secreted. Functionally, serine protease inhibitor. In Pimpla hypochondriaca (Parasitoid wasp), this protein is Kunitz-type serine protease inhibitor cvp2.